Reading from the N-terminus, the 207-residue chain is Small ribosomal subunit protein uS4 (207 aa).

Residues 31 to 56 (KCKLDSKPGQHGRTSGARTSDYGNQL) form a disordered region. The span at 42 to 53 (GRTSGARTSDYG) shows a compositional bias: polar residues. Residues 97–157 (TRLDNVVYRM…EKSKKQVRIV (61 aa)) enclose the S4 RNA-binding domain.

This sequence belongs to the universal ribosomal protein uS4 family. In terms of assembly, part of the 30S ribosomal subunit. Contacts protein S5. The interaction surface between S4 and S5 is involved in control of translational fidelity.

In terms of biological role, one of the primary rRNA binding proteins, it binds directly to 16S rRNA where it nucleates assembly of the body of the 30S subunit. With S5 and S12 plays an important role in translational accuracy. This chain is Small ribosomal subunit protein uS4, found in Herminiimonas arsenicoxydans.